The sequence spans 158 residues: Aspartate carbamoyltransferase regulatory chain (158 aa).

Cys111, Cys116, Cys140, and Cys143 together coordinate Zn(2+).

The protein belongs to the PyrI family. Contains catalytic and regulatory chains. Zn(2+) is required as a cofactor.

Functionally, involved in allosteric regulation of aspartate carbamoyltransferase. This Metallosphaera sedula (strain ATCC 51363 / DSM 5348 / JCM 9185 / NBRC 15509 / TH2) protein is Aspartate carbamoyltransferase regulatory chain.